The chain runs to 292 residues: tRNA pseudouridine synthase B (292 aa).

Residue Asp40 is the Nucleophile of the active site.

This sequence belongs to the pseudouridine synthase TruB family. Type 1 subfamily.

It catalyses the reaction uridine(55) in tRNA = pseudouridine(55) in tRNA. Its function is as follows. Responsible for synthesis of pseudouridine from uracil-55 in the psi GC loop of transfer RNAs. The chain is tRNA pseudouridine synthase B from Mycoplasma mycoides subsp. mycoides SC (strain CCUG 32753 / NCTC 10114 / PG1).